Here is a 366-residue protein sequence, read N- to C-terminus: Mitogen-activated protein kinase sakA (366 aa).

The region spanning 20–299 (YTDLQPVGMG…AGEALAHEYL (280 aa)) is the Protein kinase domain. ATP contacts are provided by residues 26-34 (VGMGAFGLV) and Lys49. The Proton acceptor role is filled by Asp141. Residue Thr171 is modified to Phosphothreonine. A TXY motif is present at residues 171-173 (TGY). Tyr173 is modified (phosphotyrosine).

This sequence belongs to the protein kinase superfamily. Ser/Thr protein kinase family. MAP kinase subfamily. HOG1 sub-subfamily. In terms of assembly, interacts with the AGC kinase ypkA. Interacts with sakA upon osmotic and cell wall stresses. It depends on Mg(2+) as a cofactor. Post-translationally, dually phosphorylated on Thr-171 and Tyr-173, which activates the enzyme. Environmental stresses such as high temperature, osmotic stress, cold stress or ethanol stress modulate the activation of sakA via phosphorylation.

The protein resides in the cytoplasm. The protein localises to the nucleus. It catalyses the reaction L-seryl-[protein] + ATP = O-phospho-L-seryl-[protein] + ADP + H(+). The enzyme catalyses L-threonyl-[protein] + ATP = O-phospho-L-threonyl-[protein] + ADP + H(+). With respect to regulation, activated by tyrosine and threonine phosphorylation. Deactivated by protein phosphatase 2C homolog 2 ptcB. Functionally, proline-directed serine/threonine-protein kinase involved in a signal transduction pathway that is activated by changes in the osmolarity of the extracellular environment. Controls osmotic regulation of transcription of target genes. Involved in environmental stress response. With mpkC, plays a redundant or cooperative role in the conidial stress resistance. Also plays a supportive role in osmotic stress adaptation when sakA is deficient. Involved in paradoxical growth, the cell wall integrity (CWI) pathway and biofilm formation. Also collaborates with mpkC to allow ful virulence in a neutropenic murine model ofinvasive pulmonary aspergillosis. MpkC and sakA have both independent and collaborative functions during the transcriptional response to transient osmotic stress and sakA not only seems to modulate pathways involved in nucleotide, fatty acid, nitrogen and organic acid biosynthesis but is also important for the activation of genes involved in mitochondrial and endoplasmic reticulum functions. The polypeptide is Mitogen-activated protein kinase sakA (Aspergillus fumigatus (strain ATCC MYA-4609 / CBS 101355 / FGSC A1100 / Af293) (Neosartorya fumigata)).